Here is a 577-residue protein sequence, read N- to C-terminus: Arginine--tRNA ligase (577 aa).

A 'HIGH' region motif is present at residues 122–132; sequence PNVAKEMHVGH.

It belongs to the class-I aminoacyl-tRNA synthetase family. Monomer.

Its subcellular location is the cytoplasm. It carries out the reaction tRNA(Arg) + L-arginine + ATP = L-arginyl-tRNA(Arg) + AMP + diphosphate. The chain is Arginine--tRNA ligase from Escherichia coli O127:H6 (strain E2348/69 / EPEC).